A 161-amino-acid chain; its full sequence is ATP synthase subunit b (161 aa).

The chain crosses the membrane as a helical span at residues 10–29 (AVVQLLNFLFLLWILNKLLY).

It belongs to the ATPase B chain family. F-type ATPases have 2 components, F(1) - the catalytic core - and F(0) - the membrane proton channel. F(1) has five subunits: alpha(3), beta(3), gamma(1), delta(1), epsilon(1). F(0) has three main subunits: a(1), b(2) and c(10-14). The alpha and beta chains form an alternating ring which encloses part of the gamma chain. F(1) is attached to F(0) by a central stalk formed by the gamma and epsilon chains, while a peripheral stalk is formed by the delta and b chains.

Its subcellular location is the cell inner membrane. Functionally, f(1)F(0) ATP synthase produces ATP from ADP in the presence of a proton or sodium gradient. F-type ATPases consist of two structural domains, F(1) containing the extramembraneous catalytic core and F(0) containing the membrane proton channel, linked together by a central stalk and a peripheral stalk. During catalysis, ATP synthesis in the catalytic domain of F(1) is coupled via a rotary mechanism of the central stalk subunits to proton translocation. Its function is as follows. Component of the F(0) channel, it forms part of the peripheral stalk, linking F(1) to F(0). This chain is ATP synthase subunit b, found in Fervidobacterium nodosum (strain ATCC 35602 / DSM 5306 / Rt17-B1).